The primary structure comprises 160 residues: Ribonuclease H (160 aa).

The 157-residue stretch at 1 to 157 (MNIEIYTDGA…CDRLAVEACQ (157 aa)) folds into the RNase H type-1 domain. Residues Asp-8, Glu-49, Asp-85, and Asp-149 each coordinate Mg(2+).

This sequence belongs to the RNase H family. As to quaternary structure, monomer. Mg(2+) serves as cofactor.

The protein localises to the cytoplasm. It catalyses the reaction Endonucleolytic cleavage to 5'-phosphomonoester.. Its function is as follows. Endonuclease that specifically degrades the RNA of RNA-DNA hybrids. This Treponema denticola (strain ATCC 35405 / DSM 14222 / CIP 103919 / JCM 8153 / KCTC 15104) protein is Ribonuclease H.